We begin with the raw amino-acid sequence, 142 residues long: Gonadotropin subunit beta-2 (142 aa).

Residues 1 to 24 (MLGLHVGTLMISLFLCILLEPVEG) form the signal peptide. 6 disulfides stabilise this stretch: Cys30–Cys78, Cys44–Cys93, Cys47–Cys131, Cys55–Cys109, Cys59–Cys111, and Cys114–Cys121. The N-linked (GlcNAc...) asparagine glycan is linked to Asn34.

The protein belongs to the glycoprotein hormones subunit beta family. As to quaternary structure, heterodimer of an alpha and a beta chain.

The protein resides in the secreted. Involved in gametogenesis and steroidogenesis. The chain is Gonadotropin subunit beta-2 (cgbb) from Coregonus autumnalis (Arctic cisco).